An 886-amino-acid polypeptide reads, in one-letter code: uncharacterized protein (886 aa).

A signal peptide spans 1–20 (MKIIKSLILLVLFMASPAKG). 5 consecutive transmembrane segments (helical) span residues 520–540 (VTIF…VEVV), 609–629 (LLFI…IITI), 647–667 (VIAF…IILM), 680–700 (ISIL…FLLI), and 779–799 (LLFY…TIVV). Residues 856–886 (EARKPQGGGEHTGKFFQNRNDVKPEQTERND) form a disordered region. A compositionally biased stretch (basic and acidic residues) spans 875-886 (NDVKPEQTERND).

Belongs to the TrbL/VirB6 family.

It localises to the cell membrane. This is an uncharacterized protein from Rickettsia bellii (strain RML369-C).